The sequence spans 486 residues: Kynureninase 1 (486 aa).

The disordered stretch occupies residues 53 to 72 (DLKRTTLDPNQEPEHSPTPS). Pyridoxal 5'-phosphate contacts are provided by residues leucine 146, threonine 147, 174–177 (FPSD), serine 231, aspartate 260, histidine 263, and tyrosine 285. Lysine 286 is modified (N6-(pyridoxal phosphate)lysine). Residues tryptophan 326 and asparagine 354 each coordinate pyridoxal 5'-phosphate.

The protein belongs to the kynureninase family. Homodimer. Pyridoxal 5'-phosphate serves as cofactor.

It is found in the cytoplasm. It carries out the reaction L-kynurenine + H2O = anthranilate + L-alanine + H(+). The enzyme catalyses 3-hydroxy-L-kynurenine + H2O = 3-hydroxyanthranilate + L-alanine + H(+). It participates in amino-acid degradation; L-kynurenine degradation; L-alanine and anthranilate from L-kynurenine: step 1/1. The protein operates within cofactor biosynthesis; NAD(+) biosynthesis; quinolinate from L-kynurenine: step 2/3. In terms of biological role, catalyzes the cleavage of L-kynurenine (L-Kyn) and L-3-hydroxykynurenine (L-3OHKyn) into anthranilic acid (AA) and 3-hydroxyanthranilic acid (3-OHAA), respectively. The chain is Kynureninase 1 (bna5-1) from Aspergillus clavatus (strain ATCC 1007 / CBS 513.65 / DSM 816 / NCTC 3887 / NRRL 1 / QM 1276 / 107).